A 498-amino-acid chain; its full sequence is ATP synthase subunit beta, chloroplastic (498 aa).

An ATP-binding site is contributed by 172–179; it reads GGAGVGKT.

This sequence belongs to the ATPase alpha/beta chains family. F-type ATPases have 2 components, CF(1) - the catalytic core - and CF(0) - the membrane proton channel. CF(1) has five subunits: alpha(3), beta(3), gamma(1), delta(1), epsilon(1). CF(0) has four main subunits: a(1), b(1), b'(1) and c(9-12).

The protein localises to the plastid. It is found in the chloroplast thylakoid membrane. The enzyme catalyses ATP + H2O + 4 H(+)(in) = ADP + phosphate + 5 H(+)(out). Its function is as follows. Produces ATP from ADP in the presence of a proton gradient across the membrane. The catalytic sites are hosted primarily by the beta subunits. The chain is ATP synthase subunit beta, chloroplastic from Atropa belladonna (Belladonna).